We begin with the raw amino-acid sequence, 100 residues long: Putative insulin-like peptide beta-type 6 (100 aa).

The first 18 residues, 1–18 (MHSIVALMLIGTILPIAA), serve as a signal peptide directing secretion. Cystine bridges form between Cys54–Cys83, Cys66–Cys96, Cys70–Cys97, and Cys82–Cys87.

It belongs to the insulin family.

It is found in the secreted. The protein is Putative insulin-like peptide beta-type 6 (ins-5) of Caenorhabditis elegans.